The sequence spans 235 residues: 2-C-methyl-D-erythritol 4-phosphate cytidylyltransferase (235 aa).

This sequence belongs to the IspD/TarI cytidylyltransferase family. IspD subfamily.

The catalysed reaction is 2-C-methyl-D-erythritol 4-phosphate + CTP + H(+) = 4-CDP-2-C-methyl-D-erythritol + diphosphate. The protein operates within isoprenoid biosynthesis; isopentenyl diphosphate biosynthesis via DXP pathway; isopentenyl diphosphate from 1-deoxy-D-xylulose 5-phosphate: step 2/6. Its function is as follows. Catalyzes the formation of 4-diphosphocytidyl-2-C-methyl-D-erythritol from CTP and 2-C-methyl-D-erythritol 4-phosphate (MEP). This is 2-C-methyl-D-erythritol 4-phosphate cytidylyltransferase from Synechococcus sp. (strain JA-3-3Ab) (Cyanobacteria bacterium Yellowstone A-Prime).